Reading from the N-terminus, the 743-residue chain is Phosphoribosylformylglycinamidine synthase subunit PurL (743 aa).

His-54 is a catalytic residue. Tyr-57 and Lys-96 together coordinate ATP. Glu-98 serves as a coordination point for Mg(2+). Residues 99 to 102 (SHNH) and Arg-121 contribute to the substrate site. The Proton acceptor role is filled by His-100. Residue Asp-122 coordinates Mg(2+). A substrate-binding site is contributed by Gln-245. Asp-273 is a Mg(2+) binding site. Position 317–319 (317–319 (ESQ)) interacts with substrate. ATP-binding residues include Asp-500 and Gly-537. Asn-538 contacts Mg(2+). Ser-540 contributes to the substrate binding site.

This sequence belongs to the FGAMS family. In terms of assembly, monomer. Part of the FGAM synthase complex composed of 1 PurL, 1 PurQ and 2 PurS subunits.

It is found in the cytoplasm. It catalyses the reaction N(2)-formyl-N(1)-(5-phospho-beta-D-ribosyl)glycinamide + L-glutamine + ATP + H2O = 2-formamido-N(1)-(5-O-phospho-beta-D-ribosyl)acetamidine + L-glutamate + ADP + phosphate + H(+). It participates in purine metabolism; IMP biosynthesis via de novo pathway; 5-amino-1-(5-phospho-D-ribosyl)imidazole from N(2)-formyl-N(1)-(5-phospho-D-ribosyl)glycinamide: step 1/2. In terms of biological role, part of the phosphoribosylformylglycinamidine synthase complex involved in the purines biosynthetic pathway. Catalyzes the ATP-dependent conversion of formylglycinamide ribonucleotide (FGAR) and glutamine to yield formylglycinamidine ribonucleotide (FGAM) and glutamate. The FGAM synthase complex is composed of three subunits. PurQ produces an ammonia molecule by converting glutamine to glutamate. PurL transfers the ammonia molecule to FGAR to form FGAM in an ATP-dependent manner. PurS interacts with PurQ and PurL and is thought to assist in the transfer of the ammonia molecule from PurQ to PurL. The sequence is that of Phosphoribosylformylglycinamidine synthase subunit PurL from Bacillus pumilus (strain SAFR-032).